Here is a 136-residue protein sequence, read N- to C-terminus: Nodulation protein K (136 aa).

The chain is Nodulation protein K (nodK) from Bradyrhizobium sp. (strain ANU 289).